We begin with the raw amino-acid sequence, 299 residues long: tRNA dimethylallyltransferase (299 aa).

13-20 contributes to the ATP binding site; it reads GPTASGKT. 15–20 is a binding site for substrate; that stretch reads TASGKT. The tract at residues 38–41 is interaction with substrate tRNA; that stretch reads DSRQ.

The protein belongs to the IPP transferase family. As to quaternary structure, monomer. The cofactor is Mg(2+).

It catalyses the reaction adenosine(37) in tRNA + dimethylallyl diphosphate = N(6)-dimethylallyladenosine(37) in tRNA + diphosphate. Functionally, catalyzes the transfer of a dimethylallyl group onto the adenine at position 37 in tRNAs that read codons beginning with uridine, leading to the formation of N6-(dimethylallyl)adenosine (i(6)A). The polypeptide is tRNA dimethylallyltransferase (Prochlorococcus marinus (strain MIT 9313)).